Here is a 148-residue protein sequence, read N- to C-terminus: Snaclec jerdonuxin subunit beta (148 aa).

The N-terminal stretch at 1–23 (MVRFIFVSFGLLVVFLSLSGIGA) is a signal peptide. Cystine bridges form between C27–C38, C55–C144, and C121–C136. The region spanning 34–145 (YDEHCYQVFQ…CSSKRYIVCK (112 aa)) is the C-type lectin domain.

Belongs to the snaclec family. In terms of assembly, tetramer of 4 heterodimers of alpha and beta subunits; disulfide-linked. As to expression, expressed by the venom gland.

The protein localises to the secreted. Functionally, snaclec that strongly induces platelet aggregation, in a dose-dependent manner. The polypeptide is Snaclec jerdonuxin subunit beta (Protobothrops jerdonii (Jerdon's pitviper)).